We begin with the raw amino-acid sequence, 389 residues long: Succinate--CoA ligase [ADP-forming] subunit beta (389 aa).

One can recognise an ATP-grasp domain in the interval 9–244 (KQLLAEYGIP…KTQEDETEVT (236 aa)). ATP is bound by residues Lys-46, 53 to 55 (GRG), Gly-102, and Glu-107. Mg(2+) is bound by residues Asn-199 and Asp-213. Substrate-binding positions include Asn-264 and 321–323 (GIV).

This sequence belongs to the succinate/malate CoA ligase beta subunit family. In terms of assembly, heterotetramer of two alpha and two beta subunits. It depends on Mg(2+) as a cofactor.

The catalysed reaction is succinate + ATP + CoA = succinyl-CoA + ADP + phosphate. It carries out the reaction GTP + succinate + CoA = succinyl-CoA + GDP + phosphate. Its pathway is carbohydrate metabolism; tricarboxylic acid cycle; succinate from succinyl-CoA (ligase route): step 1/1. Succinyl-CoA synthetase functions in the citric acid cycle (TCA), coupling the hydrolysis of succinyl-CoA to the synthesis of either ATP or GTP and thus represents the only step of substrate-level phosphorylation in the TCA. The beta subunit provides nucleotide specificity of the enzyme and binds the substrate succinate, while the binding sites for coenzyme A and phosphate are found in the alpha subunit. The protein is Succinate--CoA ligase [ADP-forming] subunit beta of Xanthomonas euvesicatoria pv. vesicatoria (strain 85-10) (Xanthomonas campestris pv. vesicatoria).